The chain runs to 82 residues: Immediate early response 3-interacting protein 1 (82 aa).

2 helical membrane-spanning segments follow: residues 2–22 (AFTLYSLLQAALLCVNAIAVL) and 62–82 (VMRVPLIIVNSIAIVLLLLFG).

It belongs to the YOS1 family.

It localises to the endoplasmic reticulum membrane. Regulator of endoplasmic reticulum secretion that acts as a key determinant of brain size. Required for secretion of extracellular matrix proteins. Required for correct brain development by depositing sufficient extracellular matrix proteins for tissue integrity and the proliferation of neural progenitors. Acts as a regulator of the unfolded protein response (UPR). The chain is Immediate early response 3-interacting protein 1 from Bos taurus (Bovine).